We begin with the raw amino-acid sequence, 190 residues long: UPF0232 protein SCO3875 (190 aa).

2 disordered regions span residues 1 to 70 and 163 to 190; these read MSAD…GRDP and GPGG…DTYG. Residues 26 to 35 are compositionally biased toward low complexity; that stretch reads GVDLARVALR. A compositionally biased stretch (basic and acidic residues) spans 36 to 45; the sequence is AAREAARARG. Over residues 163-172 the composition is skewed to gly residues; sequence GPGGPGGPGR.

This sequence belongs to the UPF0232 family.

This chain is UPF0232 protein SCO3875, found in Streptomyces coelicolor (strain ATCC BAA-471 / A3(2) / M145).